A 289-amino-acid polypeptide reads, in one-letter code: Mas-related G-protein coupled receptor member G (289 aa).

Over 1–13 the chain is Extracellular; sequence MFSIFNIWGTFNK. The helical transmembrane segment at 14–34 threads the bilayer; sequence VLFFLSLTVSLAGLVGNALLL. Over 35 to 52 the chain is Cytoplasmic; it reads WHLGLHIKKGPFNTYLLH. The chain crosses the membrane as a helical span at residues 53 to 73; the sequence is LAAADFLFLSCQVGFSIATIV. The Extracellular portion of the chain corresponds to 74–78; sequence SGHED. The chain crosses the membrane as a helical span at residues 79–99; sequence TLYFPVTFLWFAVGLWLLAAF. The Cytoplasmic segment spans residues 100–120; it reads SVDCCLAYMFPSFCSPNRRPR. A helical transmembrane segment spans residues 121-141; that stretch reads FTSVVLCLVIWALTMPAVLLP. Residues 142-164 lie on the Extracellular side of the membrane; the sequence is ANACGLLKNGMSLLVCLKYHWTS. Residues 165-185 traverse the membrane as a helical segment; it reads VTWLAVLSGMACGASKFLLIF. Topologically, residues 186–199 are cytoplasmic; that stretch reads GNCCSSQPPPKFCK. A helical membrane pass occupies residues 200–220; sequence LAQCSGILLFFCRLPLVVYWC. At 221 to 222 the chain is on the extracellular side; that stretch reads LR. A helical transmembrane segment spans residues 223-243; sequence PVLKFLLPFFFPLATLLACID. At 244–289 the chain is on the cytoplasmic side; the sequence is SSAKPLLYYMKGRQLRKDPLQVALNRALGEESQSGLGGLSLPMHQV.

Belongs to the G-protein coupled receptor 1 family. Mas subfamily.

Its subcellular location is the cell membrane. Its function is as follows. Orphan receptor. May regulate nociceptor function and/or development, including the sensation or modulation of pain. This chain is Mas-related G-protein coupled receptor member G (Mrgprg), found in Mus musculus (Mouse).